Reading from the N-terminus, the 395-residue chain is MTKALYLDCHAGIAGDMLLSALVDLGANPEDIESELKKLPLDQFKLHFQKRVKQGIHAMTLNIDVKEANHHRHVNDIFKMIDDSTLPERVKYRSKKIFEIIGQAEAKIHGMSFEEVHFHEVGAMDSIIDIIGGCIALEQLGINTLYCSAIPTGHGKINIAHGIYPIPAPATAEILKGIPIAHFDVQSELTTPTGAAFAKGLVSSFGPFPSATIQHIGYGAGSKDFDFPNILRVIQFESEFEQQDSVQVIECQIDDMTPEALGYFMNNALEQGALDAYYTPIFMKKSRPSTQLTLICKLHDKTYFEQLILQETSSLGVRSTSVNRKTLNRAFKILSTQHGTVSIKFGLQNGKIMKMKPEYEDLKKIAKTTKQPFQVIHNEVLQQLYQTYHIGNILQ.

It belongs to the LarC family.

The enzyme catalyses Ni(II)-pyridinium-3,5-bisthiocarboxylate mononucleotide = pyridinium-3,5-bisthiocarboxylate mononucleotide + Ni(2+). Its function is as follows. Involved in the biosynthesis of a nickel-pincer cofactor ((SCS)Ni(II) pincer complex). Binds Ni(2+), and functions in nickel delivery to pyridinium-3,5-bisthiocarboxylic acid mononucleotide (P2TMN), to form the mature cofactor. Is thus probably required for the activation of nickel-pincer cofactor-dependent enzymes. This chain is Pyridinium-3,5-bisthiocarboxylic acid mononucleotide nickel insertion protein, found in Staphylococcus epidermidis (strain ATCC 12228 / FDA PCI 1200).